The chain runs to 320 residues: E3 ubiquitin-protein ligase RZF1 (320 aa).

At serine 2 the chain carries N-acetylserine. The RING-type; atypical zinc-finger motif lies at 186-227 (CPVCKDEFELKSEAKQMPCHHIYHSDCIVPWLVQHNSCPVCR). The segment at 229–320 (ELPSRGSSSS…MGYSGWPFDY (92 aa)) is disordered. Low complexity-rich tracts occupy residues 232 to 249 (SRGS…STNG) and 295 to 308 (QQQQ…QQQQ).

Expressed in seedlings and in flowers.

It catalyses the reaction S-ubiquitinyl-[E2 ubiquitin-conjugating enzyme]-L-cysteine + [acceptor protein]-L-lysine = [E2 ubiquitin-conjugating enzyme]-L-cysteine + N(6)-ubiquitinyl-[acceptor protein]-L-lysine.. In terms of biological role, E3 ubiquitin-protein ligase that promotes osmotic stress and abscisic acid (ABA) responses. Negatively regulates drought-mediated control of early seedling development, probably by influencing proline content, water loss, membrane ion leakage and the expression of dehydration stress-related genes (e.g. RAB18, RD29A, RD29B, AOX1A, ERD15, ERD1, COR15A, P5CS1 and P5CR). Modulates bZIP11 accumulation during rehydration following drought. The protein is E3 ubiquitin-protein ligase RZF1 of Arabidopsis thaliana (Mouse-ear cress).